The primary structure comprises 548 residues: Hydroxylamine reductase (548 aa).

[4Fe-4S] cluster-binding residues include cysteine 3, cysteine 6, cysteine 15, and cysteine 21. Residues histidine 240, glutamate 264, cysteine 308, cysteine 402, cysteine 430, cysteine 455, glutamate 490, and lysine 492 each contribute to the hybrid [4Fe-2O-2S] cluster site. Position 402 is a cysteine persulfide (cysteine 402).

Belongs to the HCP family. The cofactor is [4Fe-4S] cluster. Requires hybrid [4Fe-2O-2S] cluster as cofactor.

Its subcellular location is the cytoplasm. The enzyme catalyses A + NH4(+) + H2O = hydroxylamine + AH2 + H(+). Functionally, catalyzes the reduction of hydroxylamine to form NH(3) and H(2)O. This Parabacteroides distasonis (strain ATCC 8503 / DSM 20701 / CIP 104284 / JCM 5825 / NCTC 11152) protein is Hydroxylamine reductase.